Reading from the N-terminus, the 91-residue chain is Hepcidin-2 (91 aa).

An N-terminal signal peptide occupies residues 1-24 (MKLSNVFLAAVVILTCVCVFQITA). The propeptide occupies 25 to 64 (VPFIQQVQDEHHVESEELQENQHLTEAEHRLTDPLVLFRT). 4 disulfides stabilise this stretch: cysteine 73–cysteine 89, cysteine 76–cysteine 79, cysteine 77–cysteine 85, and cysteine 80–cysteine 88.

The protein belongs to the hepcidin family.

Its subcellular location is the secreted. Seems to act as a signaling molecule involved in the maintenance of iron homeostasis. Seems to be required in conjunction with HFE to regulate both intestinal iron absorption and iron storage in macrophages. May also have antimicrobial activity. The polypeptide is Hepcidin-2 (hamp2) (Danio rerio (Zebrafish)).